The following is a 323-amino-acid chain: Cyclin-dependent kinase 1 (323 aa).

The Protein kinase domain occupies 4–306 (YQKIEKIGEG…AKQACMHPYF (303 aa)). ATP contacts are provided by residues 10–18 (IGEGTYGVV) and K34. Phosphothreonine is present on T14. Y15 is modified (phosphotyrosine). Residue D147 is the Proton acceptor of the active site. The residue at position 180 (T180) is a Phosphothreonine; by CAK.

It belongs to the protein kinase superfamily. CMGC Ser/Thr protein kinase family. CDC2/CDKX subfamily. In terms of assembly, forms a stable but non-covalent complex with a regulatory subunit (SUC1) and with a cyclin.

The catalysed reaction is L-seryl-[protein] + ATP = O-phospho-L-seryl-[protein] + ADP + H(+). The enzyme catalyses L-threonyl-[protein] + ATP = O-phospho-L-threonyl-[protein] + ADP + H(+). Phosphorylation at Thr-14 or Tyr-15 inactivates the enzyme, while phosphorylation at Thr-180 activates it. Cyclin-dependent kinase that acts as a master regulator of the mitotic and meiotic cell cycles. This Emericella nidulans (strain FGSC A4 / ATCC 38163 / CBS 112.46 / NRRL 194 / M139) (Aspergillus nidulans) protein is Cyclin-dependent kinase 1.